A 238-amino-acid chain; its full sequence is Probable 2-phosphosulfolactate phosphatase (238 aa).

This sequence belongs to the ComB family. Mg(2+) is required as a cofactor.

The enzyme catalyses (2R)-O-phospho-3-sulfolactate + H2O = (2R)-3-sulfolactate + phosphate. This is Probable 2-phosphosulfolactate phosphatase from Clostridium botulinum (strain Eklund 17B / Type B).